The primary structure comprises 245 residues: MTKPPVGSNRSGRKLGQKVKKGKLKASSRRWIERHINDPYVQRAQLEGYRARAAFKLLEIDEKHKILAGARRIIDLGAAPGSWSQIAAKVTNSTDTDPRVAAIDFLEMDAIPGVSFLQMDFLDPQAPEKLKEAIGGAPDIVLSDMAAPTTGHRQTDHIRTMHLCEVAAHFAVEVLAEGGHFLAKTFQGGTERDLLNMLKQNFRQVVHVKPASSRAESVEMFLLAKGFKGRHASRSDEPAEGAAEK.

The interval 1 to 26 is disordered; the sequence is MTKPPVGSNRSGRKLGQKVKKGKLKA. Basic residues predominate over residues 11 to 26; it reads SGRKLGQKVKKGKLKA. S-adenosyl-L-methionine-binding residues include G81, W83, D104, D120, and D144. The active-site Proton acceptor is the K184.

It belongs to the class I-like SAM-binding methyltransferase superfamily. RNA methyltransferase RlmE family.

Its subcellular location is the cytoplasm. The catalysed reaction is uridine(2552) in 23S rRNA + S-adenosyl-L-methionine = 2'-O-methyluridine(2552) in 23S rRNA + S-adenosyl-L-homocysteine + H(+). Specifically methylates the uridine in position 2552 of 23S rRNA at the 2'-O position of the ribose in the fully assembled 50S ribosomal subunit. The polypeptide is Ribosomal RNA large subunit methyltransferase E (Sinorhizobium medicae (strain WSM419) (Ensifer medicae)).